The following is a 445-amino-acid chain: Tubulin beta-1 chain (445 aa).

Residues Q11, E69, S138, G142, T143, G144, N204, and N226 each coordinate GTP. A Mg(2+)-binding site is contributed by E69. The disordered stretch occupies residues 422 to 445; it reads QYQDAGMDDEYGEEYEDEAPAEEE. Over residues 427-445 the composition is skewed to acidic residues; it reads GMDDEYGEEYEDEAPAEEE.

It belongs to the tubulin family. Dimer of alpha and beta chains. A typical microtubule is a hollow water-filled tube with an outer diameter of 25 nm and an inner diameter of 15 nM. Alpha-beta heterodimers associate head-to-tail to form protofilaments running lengthwise along the microtubule wall with the beta-tubulin subunit facing the microtubule plus end conferring a structural polarity. Microtubules usually have 13 protofilaments but different protofilament numbers can be found in some organisms and specialized cells. Mg(2+) serves as cofactor.

Its subcellular location is the cytoplasm. It localises to the cytoskeleton. Tubulin is the major constituent of microtubules, a cylinder consisting of laterally associated linear protofilaments composed of alpha- and beta-tubulin heterodimers. Microtubules grow by the addition of GTP-tubulin dimers to the microtubule end, where a stabilizing cap forms. Below the cap, tubulin dimers are in GDP-bound state, owing to GTPase activity of alpha-tubulin. The chain is Tubulin beta-1 chain (TUB1) from Colletotrichum graminicola (Maize anthracnose fungus).